Reading from the N-terminus, the 257-residue chain is Pantothenate synthetase (257 aa).

29-36 contacts ATP; sequence MGNLHAGH. The Proton donor role is filled by His-36. Gln-60 lines the (R)-pantoate pocket. Gln-60 is a binding site for beta-alanine. An ATP-binding site is contributed by 145 to 148; the sequence is GEKD. Gln-151 is a (R)-pantoate binding site. ATP-binding positions include Val-174 and 182–185; that span reads LSSR.

Belongs to the pantothenate synthetase family. Homodimer.

Its subcellular location is the cytoplasm. The enzyme catalyses (R)-pantoate + beta-alanine + ATP = (R)-pantothenate + AMP + diphosphate + H(+). The protein operates within cofactor biosynthesis; (R)-pantothenate biosynthesis; (R)-pantothenate from (R)-pantoate and beta-alanine: step 1/1. In terms of biological role, catalyzes the condensation of pantoate with beta-alanine in an ATP-dependent reaction via a pantoyl-adenylate intermediate. In Coxiella burnetii (strain CbuK_Q154) (Coxiella burnetii (strain Q154)), this protein is Pantothenate synthetase.